The following is a 145-amino-acid chain: NADH-quinone oxidoreductase subunit A (145 aa).

3 helical membrane-spanning segments follow: residues phenylalanine 14 to phenylalanine 34, phenylalanine 66 to tryptophan 86, and valine 96 to valine 116.

It belongs to the complex I subunit 3 family. In terms of assembly, NDH-1 is composed of 13 different subunits. Subunits NuoA, H, J, K, L, M, N constitute the membrane sector of the complex.

It localises to the cell inner membrane. The enzyme catalyses a quinone + NADH + 5 H(+)(in) = a quinol + NAD(+) + 4 H(+)(out). In terms of biological role, NDH-1 shuttles electrons from NADH, via FMN and iron-sulfur (Fe-S) centers, to quinones in the respiratory chain. The immediate electron acceptor for the enzyme in this species is believed to be ubiquinone. Couples the redox reaction to proton translocation (for every two electrons transferred, four hydrogen ions are translocated across the cytoplasmic membrane), and thus conserves the redox energy in a proton gradient. In Erwinia tasmaniensis (strain DSM 17950 / CFBP 7177 / CIP 109463 / NCPPB 4357 / Et1/99), this protein is NADH-quinone oxidoreductase subunit A.